A 231-amino-acid polypeptide reads, in one-letter code: MSEIEKVTKTQFDNVYECIFNDGTTRLCTKNLSPGHNVYGERLIKYGGVEYREWNAFRSKLAGAIVKGLKYNPIVKGSKILYLGAASGTTPSHISDIVELQGKVYSVEFSPRVIRELLLVAQYRPNMFPILADARFPQYYKSLVENVDIVYVDIAQPNETEIAMYNARFFLKKNGYMMIAIKSRSIDVTKDPREIYNAEAKKLEDAGFDIREVLELDPYDKDHAMIVVKYK.

S-adenosyl-L-methionine is bound by residues 89-90 (TT), 108-109 (EF), 133-134 (DA), and 153-156 (DIAQ).

Belongs to the methyltransferase superfamily. Fibrillarin family. In terms of assembly, interacts with nop5. Component of box C/D small ribonucleoprotein (sRNP) particles that contain rpl7ae, FlpA and nop5, plus a guide RNA.

Its function is as follows. Involved in pre-rRNA and tRNA processing. Utilizes the methyl donor S-adenosyl-L-methionine to catalyze the site-specific 2'-hydroxyl methylation of ribose moieties in rRNA and tRNA. Site specificity is provided by a guide RNA that base pairs with the substrate. Methylation occurs at a characteristic distance from the sequence involved in base pairing with the guide RNA. The chain is Fibrillarin-like rRNA/tRNA 2'-O-methyltransferase from Sulfolobus acidocaldarius (strain ATCC 33909 / DSM 639 / JCM 8929 / NBRC 15157 / NCIMB 11770).